Here is a 289-residue protein sequence, read N- to C-terminus: tRNA pseudouridine synthase B (289 aa).

Aspartate 38 acts as the Nucleophile in catalysis.

This sequence belongs to the pseudouridine synthase TruB family. Type 1 subfamily.

It carries out the reaction uridine(55) in tRNA = pseudouridine(55) in tRNA. Responsible for synthesis of pseudouridine from uracil-55 in the psi GC loop of transfer RNAs. In Clostridium kluyveri (strain ATCC 8527 / DSM 555 / NBRC 12016 / NCIMB 10680 / K1), this protein is tRNA pseudouridine synthase B.